Here is a 455-residue protein sequence, read N- to C-terminus: Argininosuccinate lyase (455 aa).

The protein belongs to the lyase 1 family. Argininosuccinate lyase subfamily.

It localises to the cytoplasm. It carries out the reaction 2-(N(omega)-L-arginino)succinate = fumarate + L-arginine. It functions in the pathway amino-acid biosynthesis; L-arginine biosynthesis; L-arginine from L-ornithine and carbamoyl phosphate: step 3/3. In Roseiflexus sp. (strain RS-1), this protein is Argininosuccinate lyase.